Consider the following 255-residue polypeptide: 4-hydroxy-tetrahydrodipicolinate reductase (255 aa).

Residues G8–V13, G88–T90, and A112–M115 contribute to the NAD(+) site. Residue H144 is the Proton donor/acceptor of the active site. A (S)-2,3,4,5-tetrahydrodipicolinate-binding site is contributed by H145. Catalysis depends on K148, which acts as the Proton donor. G154–T155 contacts (S)-2,3,4,5-tetrahydrodipicolinate.

It belongs to the DapB family.

The protein resides in the cytoplasm. It carries out the reaction (S)-2,3,4,5-tetrahydrodipicolinate + NAD(+) + H2O = (2S,4S)-4-hydroxy-2,3,4,5-tetrahydrodipicolinate + NADH + H(+). It catalyses the reaction (S)-2,3,4,5-tetrahydrodipicolinate + NADP(+) + H2O = (2S,4S)-4-hydroxy-2,3,4,5-tetrahydrodipicolinate + NADPH + H(+). It participates in amino-acid biosynthesis; L-lysine biosynthesis via DAP pathway; (S)-tetrahydrodipicolinate from L-aspartate: step 4/4. Its function is as follows. Catalyzes the conversion of 4-hydroxy-tetrahydrodipicolinate (HTPA) to tetrahydrodipicolinate. This chain is 4-hydroxy-tetrahydrodipicolinate reductase, found in Helicobacter hepaticus (strain ATCC 51449 / 3B1).